The sequence spans 64 residues: LTCLNCPEMFCGKFQICRNGEKICFKKLHQRRPLSRYIRGCADTCPVGYPKEMIECCSTDKCNR.

Intrachain disulfides connect C3–C24, C6–C11, C17–C41, C45–C56, and C57–C62.

The protein belongs to the three-finger toxin family. Ancestral subfamily. Orphan group II sub-subfamily. Expressed by the venom gland.

The protein localises to the secreted. Binds with low affinity to muscular (alpha-1-beta-1-delta-epsilon/CHRNA1-CHRNB1-CHRND-CHRNE) and very low affinity to neuronal (alpha-7/CHRNA7) nicotinic acetylcholine receptor (nAChR). This Naja kaouthia (Monocled cobra) protein is Weak toxin CM-9a.